The following is a 1223-amino-acid chain: A disintegrin and metalloproteinase with thrombospondin motifs 14 (1223 aa).

Residues 1-22 form the signal peptide; the sequence is MAPLRALLSYLLPLHCALCAAA. Residues 23-252 constitute a propeptide that is removed on maturation; sequence GSRTPELHLS…QLGDTERKRR (230 aa). Asparagine 109 carries an N-linked (GlcNAc...) asparagine glycan. The 202-residue stretch at 259–460 folds into the Peptidase M12B domain; sequence YSIEVLLVVD…PSYDCLLDDP (202 aa). Cystine bridges form between cysteine 336-cysteine 382, cysteine 376-cysteine 455, and cysteine 415-cysteine 441. Histidine 398 provides a ligand contact to Zn(2+). Residue glutamate 399 is part of the active site. Zn(2+) contacts are provided by histidine 402 and histidine 408. One can recognise a Disintegrin domain in the interval 461–551; sequence FDPAWPQPPE…WKSPEQTYGQ (91 aa). N-linked (GlcNAc...) asparagine glycosylation is present at asparagine 475. Disulfide bonds link cysteine 482/cysteine 507, cysteine 493/cysteine 516, cysteine 502/cysteine 535, cysteine 529/cysteine 540, cysteine 564/cysteine 601, cysteine 568/cysteine 606, and cysteine 579/cysteine 591. A TSP type-1 1 domain is found at 552 to 607; the sequence is DGGWSSWTKFGSCSRSCGGGVRSRSRSCNNPSPAYGGRLCLGPMFEYQVCNSEECP. The spacer stretch occupies residues 730-846; sequence LKLVQIPAGA…GSNNVLLEEM (117 aa). TSP type-1 domains are found at residues 847–907, 908–967, and 968–1022; these read DTYE…HPCS, QPVW…LRVP, and CPAQ…PACG. A glycan (N-linked (GlcNAc...) asparagine) is linked at asparagine 941. 3 disulfide bridges follow: cysteine 980–cysteine 1016, cysteine 984–cysteine 1021, and cysteine 995–cysteine 1005. Asparagine 1027 carries an N-linked (GlcNAc...) asparagine glycan. One can recognise a PLAC domain in the interval 1059-1097; sequence STEPCTGDRSVFCQMEVLDRYCSIPGYHRLCCVSCIKKA. Positions 1100–1223 are disordered; the sequence is PNPGPDPGPT…TSLPAASPVT (124 aa). A compositionally biased stretch (pro residues) spans 1101–1125; it reads NPGPDPGPTSLPPFSTPGSPLPGPQ. Residues 1199 to 1211 are compositionally biased toward basic and acidic residues; that stretch reads PEDKGQPGEDLRH.

The precursor is cleaved by a furin endopeptidase. In terms of processing, glycosylated. Can be O-fucosylated by POFUT2 on a serine or a threonine residue found within the consensus sequence C1-X(2)-(S/T)-C2-G of the TSP type-1 repeat domains where C1 and C2 are the first and second cysteine residue of the repeat, respectively. Fucosylated repeats can then be further glycosylated by the addition of a beta-1,3-glucose residue by the glucosyltransferase, B3GALTL. Fucosylation mediates the efficient secretion of ADAMTS family members. Can also be C-glycosylated with one or two mannose molecules on tryptophan residues within the consensus sequence W-X-X-W of the TPRs, and N-glycosylated. These other glycosylations can also facilitate secretion. In terms of tissue distribution, expressed in retina and at low levels in brain, lung and placenta. High expression in fetal tissues.

The protein localises to the secreted. It localises to the extracellular space. Its subcellular location is the extracellular matrix. Functionally, has aminoprocollagen type I processing activity in the absence of ADAMTS2. Seems to be synthesized as a latent enzyme that requires activation to display aminoprocollagen peptidase activity. Cleaves lysyl oxidase LOX at a site downstream of its propeptide cleavage site to produce a short LOX form. This is A disintegrin and metalloproteinase with thrombospondin motifs 14 (ADAMTS14) from Homo sapiens (Human).